A 192-amino-acid polypeptide reads, in one-letter code: Imidazoleglycerol-phosphate dehydratase (192 aa).

The protein belongs to the imidazoleglycerol-phosphate dehydratase family.

Its subcellular location is the cytoplasm. The catalysed reaction is D-erythro-1-(imidazol-4-yl)glycerol 3-phosphate = 3-(imidazol-4-yl)-2-oxopropyl phosphate + H2O. The protein operates within amino-acid biosynthesis; L-histidine biosynthesis; L-histidine from 5-phospho-alpha-D-ribose 1-diphosphate: step 6/9. The polypeptide is Imidazoleglycerol-phosphate dehydratase (Caldivirga maquilingensis (strain ATCC 700844 / DSM 13496 / JCM 10307 / IC-167)).